A 298-amino-acid chain; its full sequence is UDP-N-acetylenolpyruvoylglucosamine reductase (298 aa).

One can recognise an FAD-binding PCMH-type domain in the interval 26–191 (KTGGAADVFV…LDATFSLALE (166 aa)). Arginine 170 is an active-site residue. The active-site Proton donor is serine 220. Residue glutamate 290 is part of the active site.

This sequence belongs to the MurB family. FAD is required as a cofactor.

It localises to the cytoplasm. The enzyme catalyses UDP-N-acetyl-alpha-D-muramate + NADP(+) = UDP-N-acetyl-3-O-(1-carboxyvinyl)-alpha-D-glucosamine + NADPH + H(+). The protein operates within cell wall biogenesis; peptidoglycan biosynthesis. In terms of biological role, cell wall formation. The sequence is that of UDP-N-acetylenolpyruvoylglucosamine reductase from Listeria monocytogenes serovar 1/2a (strain ATCC BAA-679 / EGD-e).